Consider the following 128-residue polypeptide: Insulin-like 3 (128 aa).

The first 15 residues, 1-15, serve as a signal peptide directing secretion; that stretch reads MHALLLLLLLALGSA. Intrachain disulfides connect Cys-29-Cys-113, Cys-41-Cys-126, and Cys-112-Cys-117. The segment covering 81–94 has biased composition (low complexity); it reads ALDPDPALDPQLPH. Residues 81-101 form a disordered region; the sequence is ALDPDPALDPQLPHQASQRQR.

It belongs to the insulin family. Heterodimer of a B chain and an A chain linked by two disulfide bonds. Expressed in Leydig cells of the testis, and weakly in the theca interna cells of antral follicles and the corpus luteum of the ovary.

The protein resides in the secreted. In terms of biological role, seems to play a role in testicular function. May be a trophic hormone with a role in testicular descent in fetal life. Is a ligand for LGR8 receptor. This is Insulin-like 3 (Insl3) from Rattus norvegicus (Rat).